The chain runs to 370 residues: UDP-N-acetylglucosamine--N-acetylmuramyl-(pentapeptide) pyrophosphoryl-undecaprenol N-acetylglucosamine transferase (370 aa).

UDP-N-acetyl-alpha-D-glucosamine contacts are provided by residues 15-17 (TGG), Asn129, Arg170, Ser199, Ile254, and Gln299.

It belongs to the glycosyltransferase 28 family. MurG subfamily.

The protein localises to the cell inner membrane. The enzyme catalyses di-trans,octa-cis-undecaprenyl diphospho-N-acetyl-alpha-D-muramoyl-L-alanyl-D-glutamyl-meso-2,6-diaminopimeloyl-D-alanyl-D-alanine + UDP-N-acetyl-alpha-D-glucosamine = di-trans,octa-cis-undecaprenyl diphospho-[N-acetyl-alpha-D-glucosaminyl-(1-&gt;4)]-N-acetyl-alpha-D-muramoyl-L-alanyl-D-glutamyl-meso-2,6-diaminopimeloyl-D-alanyl-D-alanine + UDP + H(+). It participates in cell wall biogenesis; peptidoglycan biosynthesis. In terms of biological role, cell wall formation. Catalyzes the transfer of a GlcNAc subunit on undecaprenyl-pyrophosphoryl-MurNAc-pentapeptide (lipid intermediate I) to form undecaprenyl-pyrophosphoryl-MurNAc-(pentapeptide)GlcNAc (lipid intermediate II). The protein is UDP-N-acetylglucosamine--N-acetylmuramyl-(pentapeptide) pyrophosphoryl-undecaprenol N-acetylglucosamine transferase of Magnetococcus marinus (strain ATCC BAA-1437 / JCM 17883 / MC-1).